The primary structure comprises 194 residues: Putative manganese efflux pump MntP (194 aa).

A run of 6 helical transmembrane segments spans residues 3–23 (PFSIVLIGFAMSTDAFAAAIG), 37–57 (LRAGLIFGCIEAITPVIGWLL), 69–89 (DHWIAFVLLGALGTHMIVAGL), 110–132 (LGLATTGFATSIDAMAVGVSLAF), 147–167 (CTFSMVTAGVMLGRALGNLIG), and 172–192 (MLGGLILVIVGSVILYEHLSG).

This sequence belongs to the MntP (TC 9.B.29) family.

The protein localises to the cell inner membrane. Probably functions as a manganese efflux pump. This Xanthomonas axonopodis pv. citri (strain 306) protein is Putative manganese efflux pump MntP.